The sequence spans 668 residues: Macrolide export ATP-binding/permease protein MacB 1/2 (668 aa).

One can recognise an ABC transporter domain in the interval 9–247; it reads IRLRGVGREY…PGPGPAQAPQ (239 aa). Residue 45-52 participates in ATP binding; it reads GASGSGKS. Residues 230-257 form a disordered region; that stretch reads RTGAPAADPGPGPAQAPQPAPQPAPVQA. Over residues 237–255 the composition is skewed to pro residues; that stretch reads DPGPGPAQAPQPAPQPAPV. The next 4 membrane-spanning stretches (helical) occupy residues 294 to 314, 541 to 561, 598 to 618, and 634 to 654; these read FLTM…VALG, LALL…IGVM, LVCV…GLAF, and MLAA…LPAV.

Belongs to the ABC transporter superfamily. Macrolide exporter (TC 3.A.1.122) family. Homodimer.

It localises to the cell inner membrane. In terms of biological role, non-canonical ABC transporter that contains transmembrane domains (TMD), which form a pore in the inner membrane, and an ATP-binding domain (NBD), which is responsible for energy generation. Confers resistance against macrolides. In Paracoccus denitrificans (strain Pd 1222), this protein is Macrolide export ATP-binding/permease protein MacB 1/2.